The primary structure comprises 286 residues: Undecaprenyl-diphosphatase (286 aa).

7 helical membrane-spanning segments follow: residues 50–70 (GAAFTAITQLGTETAVIVYFW), 97–117 (MGWLVILGSLPIIVLGLIFQD), 126–146 (LWIVATMLIVFGLILAVADAV), 156–176 (LTYKHGIFYGFAQAMALIPGV), 200–220 (SFLLAIPAVFGSGLYQLYKVM), 236–256 (LATLIAFVVGYVIIGWFLKFV), and 264–284 (FVWYRIFLGLALYLLLGFNVI).

The protein belongs to the UppP family.

The protein resides in the cell membrane. It catalyses the reaction di-trans,octa-cis-undecaprenyl diphosphate + H2O = di-trans,octa-cis-undecaprenyl phosphate + phosphate + H(+). In terms of biological role, catalyzes the dephosphorylation of undecaprenyl diphosphate (UPP). Confers resistance to bacitracin. The polypeptide is Undecaprenyl-diphosphatase (Arthrobacter sp. (strain FB24)).